The chain runs to 142 residues: Large ribosomal subunit protein uL13 (142 aa).

This sequence belongs to the universal ribosomal protein uL13 family. Part of the 50S ribosomal subunit.

In terms of biological role, this protein is one of the early assembly proteins of the 50S ribosomal subunit, although it is not seen to bind rRNA by itself. It is important during the early stages of 50S assembly. This is Large ribosomal subunit protein uL13 from Caldicellulosiruptor saccharolyticus (strain ATCC 43494 / DSM 8903 / Tp8T 6331).